Reading from the N-terminus, the 182-residue chain is MMNNKNKFKNKEWKFSKKQVQLIYLTSSIISGLFLGLALLSTYLIAGLPNDNAFVLFVKEQKFYFPFFMTIGFINLIISMLTLLPTLKTLWRTVAKMHQYGDLSKEEFEALDILVEQIRNRYISVENIKAVISSNNYKTLDEELKKLEQQEKQLKIQEQEQKVKRLEQEIIKDDKTRVQSDY.

Helical transmembrane passes span 29 to 49 and 63 to 83; these read IISG…AGLP and FYFP…MLTL.

It is found in the cell membrane. This is an uncharacterized protein from Ureaplasma parvum serovar 3 (strain ATCC 700970).